The sequence spans 95 residues: Integration host factor subunit alpha (95 aa).

Residues 51–71 (NFDLRDKNERPGRNPKTGEDI) form a disordered region. A compositionally biased stretch (basic and acidic residues) spans 53 to 69 (DLRDKNERPGRNPKTGE).

This sequence belongs to the bacterial histone-like protein family. In terms of assembly, heterodimer of an alpha and a beta chain.

This protein is one of the two subunits of integration host factor, a specific DNA-binding protein that functions in genetic recombination as well as in transcriptional and translational control. The sequence is that of Integration host factor subunit alpha from Vibrio vulnificus (strain CMCP6).